A 503-amino-acid chain; its full sequence is 2-(3-amino-3-carboxypropyl)histidine synthase subunit 2 (503 aa).

Cysteine 93, cysteine 114, and cysteine 334 together coordinate [4Fe-4S] cluster. Residues 464–503 (GLDSVDEGEGPSKLYEGQSGIAKGYVGEGSKEKIQRDFGK) are disordered. Residues 492–503 (GSKEKIQRDFGK) are compositionally biased toward basic and acidic residues.

This sequence belongs to the DPH1/DPH2 family. DPH2 subfamily. In terms of assembly, component of the 2-(3-amino-3-carboxypropyl)histidine synthase complex composed of dph1, dph2, dph3 and a NADH-dependent reductase, predominantly cbr1. [4Fe-4S] cluster serves as cofactor.

It is found in the cytoplasm. It functions in the pathway protein modification; peptidyl-diphthamide biosynthesis. Required for the first step of diphthamide biosynthesis, a post-translational modification of histidine which occurs in elongation factor 2. Dph1 and dph2 transfer a 3-amino-3-carboxypropyl (ACP) group from S-adenosyl-L-methionine (SAM) to a histidine residue, the reaction is assisted by a reduction system comprising dph3 and a NADH-dependent reductase, predominantly cbr1. Facilitates the reduction of the catalytic iron-sulfur cluster found in the dph1 subunit. The sequence is that of 2-(3-amino-3-carboxypropyl)histidine synthase subunit 2 from Schizosaccharomyces pombe (strain 972 / ATCC 24843) (Fission yeast).